We begin with the raw amino-acid sequence, 554 residues long: Undecaprenyl phosphate-alpha-4-amino-4-deoxy-L-arabinose arabinosyl transferase (554 aa).

The next 11 membrane-spanning stretches (helical) occupy residues Leu-4–Ile-24, Phe-87–Leu-107, Phe-115–Val-135, Phe-178–Ile-198, Leu-206–Leu-226, Tyr-262–Leu-282, Glu-293–Gly-313, Leu-315–Thr-335, Ile-352–Val-372, Gln-384–Met-404, and His-410–Pro-430.

Belongs to the glycosyltransferase 83 family.

It localises to the cell inner membrane. It catalyses the reaction 4-amino-4-deoxy-alpha-L-arabinopyranosyl di-trans,octa-cis-undecaprenyl phosphate + lipid IVA = lipid IIA + di-trans,octa-cis-undecaprenyl phosphate.. It participates in lipopolysaccharide metabolism; 4-amino-4-deoxy-beta-L-arabinose-lipid A biosynthesis. Catalyzes the transfer of the L-Ara4N moiety of the glycolipid undecaprenyl phosphate-alpha-L-Ara4N to lipid A. The modified arabinose is attached to lipid A and is required for resistance to polymyxin and cationic antimicrobial peptides. The protein is Undecaprenyl phosphate-alpha-4-amino-4-deoxy-L-arabinose arabinosyl transferase of Yersinia enterocolitica serotype O:8 / biotype 1B (strain NCTC 13174 / 8081).